We begin with the raw amino-acid sequence, 195 residues long: Ureidoglycolate lyase (195 aa).

Belongs to the ureidoglycolate lyase family. In terms of assembly, homodimer.

The catalysed reaction is (S)-ureidoglycolate = urea + glyoxylate. It functions in the pathway nitrogen metabolism; (S)-allantoin degradation. Functionally, catalyzes the catabolism of the allantoin degradation intermediate (S)-ureidoglycolate, generating urea and glyoxylate. Involved in the utilization of allantoin as secondary nitrogen source when primary sources are limiting. This Saccharomyces cerevisiae (strain ATCC 204508 / S288c) (Baker's yeast) protein is Ureidoglycolate lyase (DAL3).